Reading from the N-terminus, the 167-residue chain is MSERDILIERLERKLAEKERELVELRRMNREELEKIKREIAMEAKEEVLREVHKLLQNSQIQRLSEVDSKIVELRKAMESIITELAYIKGELKGLQEKGESKVERKEIIEEKIQKAMVFENEPLYLEEKEERKPAKESKRREHDVIIPEGKKEERTDDGEDGLIVCD.

Positions 70–118 (KIVELRKAMESIITELAYIKGELKGLQEKGESKVERKEIIEEKIQKAMV) form a coiled coil. A compositionally biased stretch (basic and acidic residues) spans 128–155 (EKEERKPAKESKRREHDVIIPEGKKEER). The interval 128–167 (EKEERKPAKESKRREHDVIIPEGKKEERTDDGEDGLIVCD) is disordered.

This is an uncharacterized protein from Archaeoglobus fulgidus (strain ATCC 49558 / DSM 4304 / JCM 9628 / NBRC 100126 / VC-16).